Consider the following 255-residue polypeptide: Leucyl/phenylalanyl-tRNA--protein transferase (255 aa).

The protein belongs to the L/F-transferase family.

Its subcellular location is the cytoplasm. It catalyses the reaction N-terminal L-lysyl-[protein] + L-leucyl-tRNA(Leu) = N-terminal L-leucyl-L-lysyl-[protein] + tRNA(Leu) + H(+). The enzyme catalyses N-terminal L-arginyl-[protein] + L-leucyl-tRNA(Leu) = N-terminal L-leucyl-L-arginyl-[protein] + tRNA(Leu) + H(+). The catalysed reaction is L-phenylalanyl-tRNA(Phe) + an N-terminal L-alpha-aminoacyl-[protein] = an N-terminal L-phenylalanyl-L-alpha-aminoacyl-[protein] + tRNA(Phe). In terms of biological role, functions in the N-end rule pathway of protein degradation where it conjugates Leu, Phe and, less efficiently, Met from aminoacyl-tRNAs to the N-termini of proteins containing an N-terminal arginine or lysine. The polypeptide is Leucyl/phenylalanyl-tRNA--protein transferase (Polaromonas sp. (strain JS666 / ATCC BAA-500)).